Here is a 397-residue protein sequence, read N- to C-terminus: Putative teichuronic acid biosynthesis glycosyltransferase TuaH (397 aa).

The protein belongs to the glycosyltransferase group 1 family.

Its pathway is cell wall biogenesis; teichuronic acid biosynthesis. This chain is Putative teichuronic acid biosynthesis glycosyltransferase TuaH (tuaH), found in Bacillus subtilis (strain 168).